Here is a 500-residue protein sequence, read N- to C-terminus: Protein-cysteine N-palmitoyltransferase Rasp (500 aa).

Transmembrane regions (helical) follow at residues 15–35 (IFVY…KIYG), 73–93 (GDFI…QGFI), 105–125 (FIGV…MVLL), 134–154 (IVSL…WILC), 206–226 (SLVQ…GPII), 243–263 (LGFV…QCAL), 293–313 (FMGQ…IAFA), 372–392 (LTFA…IWSI), 429–449 (LYAM…VYFI), and 461–481 (GAYL…YCFF). Residue His-381 is part of the active site.

Belongs to the membrane-bound acyltransferase family. HHAT subfamily.

The protein localises to the membrane. It catalyses the reaction N-terminal L-cysteinyl-[protein] + hexadecanoyl-CoA = N-terminal N-hexadecanoyl-L-cysteinyl-[protein] + CoA + H(+). The catalysed reaction is N-terminal L-cysteinyl-[protein]-C-terminal glycyl cholesterol ester + hexadecanoyl-CoA = N-terminal N-hexadecanoyl-L-cysteinyl-[protein]-C-terminal glycyl cholesterol ester + CoA + H(+). Functionally, required in hedgehog (hh) expressing cells for production of appropriate signaling activity in embryos and in the imaginal precursors of adult tissues. Acts within the secretory pathway to catalyze N-terminal palmitoylation of Hh; this lipid modification is required for the embryonic and larval patterning activities of the Hh signal. Not required for Wg signaling. The polypeptide is Protein-cysteine N-palmitoyltransferase Rasp (rasp) (Drosophila melanogaster (Fruit fly)).